A 370-amino-acid chain; its full sequence is Aldo-keto reductase NECHADRAFT_45914 (370 aa).

Aspartate 78 serves as a coordination point for NADP(+). Tyrosine 83 functions as the Proton donor in the catalytic mechanism. Substrate is bound at residue histidine 174. NADP(+) contacts are provided by residues 204–205 (SS), glutamine 230, 259–269 (APLASGRLARR), and 333–341 (STVQRIEEA).

It belongs to the aldo/keto reductase family.

It participates in secondary metabolite biosynthesis. Its function is as follows. Aldo-keto reductase; part of the gene cluster that mediates the biosynthesis of sansalvamide, a cyclic pentadepsipeptide that shows promising results as potential anti-cancer drug. The nonribosmal peptide synthetase NRPS30 produces sansalvamide by incorporating successively one phenylalanine, one leucine, one alpha-hydroxyisocaproic acid (HICA), one valine and one leucine before sansalvamide is released from by cyclization by the terminal C domain of NRPS30. The HICA residue is probably provided by reduction of alpha-ketoisocaproate by the cluster-specific aldo-keto reductase (NECHADRAFT_45914). The polypeptide is Aldo-keto reductase NECHADRAFT_45914 (Fusarium vanettenii (strain ATCC MYA-4622 / CBS 123669 / FGSC 9596 / NRRL 45880 / 77-13-4) (Fusarium solani subsp. pisi)).